We begin with the raw amino-acid sequence, 364 residues long: sn-glycerol-3-phosphate import ATP-binding protein UgpC (364 aa).

The ABC transporter domain occupies 4–235 (VVLRNVRKTY…PATTFVASFI (232 aa)). 37–44 (GPSGCGKS) contacts ATP.

Belongs to the ABC transporter superfamily. sn-glycerol-3-phosphate importer (TC 3.A.1.1.3) family. As to quaternary structure, the complex is composed of two ATP-binding proteins (UgpC), two transmembrane proteins (UgpA and UgpE) and a solute-binding protein (UgpB).

It localises to the cell inner membrane. The enzyme catalyses sn-glycerol 3-phosphate(out) + ATP + H2O = sn-glycerol 3-phosphate(in) + ADP + phosphate + H(+). In terms of biological role, part of the ABC transporter complex UgpBAEC involved in sn-glycerol-3-phosphate (G3P) import. Responsible for energy coupling to the transport system. In Rhodopseudomonas palustris (strain HaA2), this protein is sn-glycerol-3-phosphate import ATP-binding protein UgpC.